The primary structure comprises 890 residues: UPF0182 protein Ppro_2689 (890 aa).

Helical transmembrane passes span 6-26, 50-70, 102-122, 157-177, 200-220, 244-264, and 266-286; these read FILILVIVALTVSLLSFLLAF, AGSGLLFAGVLFAGTLLNLLL, LGIPACAILALLVGQWGAMQW, TITAFAGFTLLTSLFLTVLVY, LAILLLLLSCVIAAGFHLDCF, TYRILTILAPLAGTALAIGLW, and GAWRMALLAPLAVIVLHVIGI.

This sequence belongs to the UPF0182 family.

The protein localises to the cell membrane. This is UPF0182 protein Ppro_2689 from Pelobacter propionicus (strain DSM 2379 / NBRC 103807 / OttBd1).